We begin with the raw amino-acid sequence, 71 residues long: MFTLKKSLLLLFFLGTISLSLCEQERDADGDEGEVEEVKRGFLDIIKDTGKEFAVKILNNLKCKLAGGCPP.

The signal sequence occupies residues 1–22 (MFTLKKSLLLLFFLGTISLSLC). The propeptide occupies 23–40 (EQERDADGDEGEVEEVKR). Cysteines 63 and 69 form a disulfide.

The protein belongs to the frog skin active peptide (FSAP) family. Brevinin subfamily. Expressed by the skin glands.

It is found in the secreted. Its subcellular location is the target cell membrane. In terms of biological role, antibacterial peptide with amphipathic alpha-helical structure that exhibits potent broad-spectrum activity against Gram-positive and -negative bacteria. It is active against Listeria ATCC 54004 (MIC=30 ug/ml), S.aureus ATCC 25923 (MIC=7.8 ug/ml), S.suis 2 CVCC 606 (MIC=31.25 ug/ml), B.subtilis ADB403 (30 ug/ml), K.pneumoniae ATCC 700603 (MIC=60 ug/ml) and P.aeruginosa ATCC 227853 (MIC=30 ug/ml). Does not show activity against Salmonella ATCC 20020 and the fungus Candida albicans. Is also cytotoxic to HeLa cells at high concentrations. In addition, shows a strong antitumor activity but only a little hemolytic activity. Despite the presence of a Gly residue at position 10, this alpha-helical peptide remains relatively rigid, not exhibiting any significant flexibility during the molecular dynamics simulation. The peptide shows a preference for a position parallel to the target membrane that suggests it exerts its antimicrobial activity through a non-pore-forming mechanism of action, such as the carpet model or the interfacial activity model. The protein is Palustrin-Ca of Aquarana catesbeiana (American bullfrog).